Consider the following 357-residue polypeptide: S-adenosylmethionine decarboxylase proenzyme (357 aa).

Residues Glu11 and Glu14 contribute to the active site. The active-site Schiff-base intermediate with substrate; via pyruvic acid is Ser71. The residue at position 71 (Ser71) is a Pyruvic acid (Ser); by autocatalysis. Cys85 functions as the Proton donor; for catalytic activity in the catalytic mechanism. Catalysis depends on proton acceptor; for processing activity residues Ser234 and His247.

Belongs to the eukaryotic AdoMetDC family. Pyruvate serves as cofactor. Post-translationally, is synthesized initially as an inactive proenzyme. Formation of the active enzyme involves a self-maturation process in which the active site pyruvoyl group is generated from an internal serine residue via an autocatalytic post-translational modification. Two non-identical subunits are generated from the proenzyme in this reaction, and the pyruvate is formed at the N-terminus of the alpha chain, which is derived from the carboxyl end of the proenzyme. The post-translation cleavage follows an unusual pathway, termed non-hydrolytic serinolysis, in which the side chain hydroxyl group of the serine supplies its oxygen atom to form the C-terminus of the beta chain, while the remainder of the serine residue undergoes an oxidative deamination to produce ammonia and the pyruvoyl group blocking the N-terminus of the alpha chain.

The catalysed reaction is S-adenosyl-L-methionine + H(+) = S-adenosyl 3-(methylsulfanyl)propylamine + CO2. Its pathway is amine and polyamine biosynthesis; S-adenosylmethioninamine biosynthesis; S-adenosylmethioninamine from S-adenosyl-L-methionine: step 1/1. The chain is S-adenosylmethionine decarboxylase proenzyme (SAMDC) from Catharanthus roseus (Madagascar periwinkle).